A 406-amino-acid chain; its full sequence is Multifunctional CCA protein (406 aa).

Gly8 and Arg11 together coordinate ATP. CTP is bound by residues Gly8 and Arg11. Residues Asp21 and Asp23 each contribute to the Mg(2+) site. Residues Arg91, Arg137, and Arg140 each coordinate ATP. The CTP site is built by Arg91, Arg137, and Arg140. The HD domain maps to 228–329; that stretch reads TGIHTLMVAE…IKILNKFDVW (102 aa).

It belongs to the tRNA nucleotidyltransferase/poly(A) polymerase family. Bacterial CCA-adding enzyme type 1 subfamily. As to quaternary structure, monomer. Can also form homodimers and oligomers. Mg(2+) is required as a cofactor. Requires Ni(2+) as cofactor.

It carries out the reaction a tRNA precursor + 2 CTP + ATP = a tRNA with a 3' CCA end + 3 diphosphate. It catalyses the reaction a tRNA with a 3' CCA end + 2 CTP + ATP = a tRNA with a 3' CCACCA end + 3 diphosphate. Catalyzes the addition and repair of the essential 3'-terminal CCA sequence in tRNAs without using a nucleic acid template. Adds these three nucleotides in the order of C, C, and A to the tRNA nucleotide-73, using CTP and ATP as substrates and producing inorganic pyrophosphate. tRNA 3'-terminal CCA addition is required both for tRNA processing and repair. Also involved in tRNA surveillance by mediating tandem CCA addition to generate a CCACCA at the 3' terminus of unstable tRNAs. While stable tRNAs receive only 3'-terminal CCA, unstable tRNAs are marked with CCACCA and rapidly degraded. In Vibrio parahaemolyticus serotype O3:K6 (strain RIMD 2210633), this protein is Multifunctional CCA protein.